The sequence spans 680 residues: Serine/threonine-protein kinase YPK1 (680 aa).

A compositionally biased stretch (basic residues) spans 1-11 (MYSWKSKFKFG). The interval 1 to 117 (MYSWKSKFKF…GTPNDATSSS (117 aa)) is disordered. Basic and acidic residues-rich tracts occupy residues 12 to 21 (KSKEEKEAKH) and 41 to 56 (GEHDASITRSSLDRKG). Residue Thr-57 is modified to Phosphothreonine. Residues 59-71 (NPSNSSVVPVRVS) are compositionally biased toward low complexity. Ser-61, Ser-64, and Ser-71 each carry phosphoserine. A compositionally biased stretch (polar residues) spans 73–83 (DASSSTSTVRD). The segment covering 84-97 (SNGGNSENTNSSQN) has biased composition (low complexity). Positions 98–117 (LDETANIGSTGTPNDATSSS) are enriched in polar residues. A Phosphoserine modification is found at Ser-170. A Protein kinase domain is found at 347–602 (FDLLKVIGKG…ADEIRNHPFF (256 aa)). Residues 353-361 (IGKGSFGKV) and Lys-376 each bind ATP. The active-site Proton acceptor is the Asp-470. The residue at position 502 (Thr-502) is a Phosphothreonine. The residue at position 504 (Thr-504) is a Phosphothreonine; by PKH1. In terms of domain architecture, AGC-kinase C-terminal spans 603–673 (SQLSWKRLLM…VGNEQLGSSM (71 aa)). Residues Ser-644 and Ser-653 each carry the phosphoserine modification. Thr-662 carries the phosphothreonine; by PKH1 modification. Ser-671 carries the post-translational modification Phosphoserine.

It belongs to the protein kinase superfamily. AGC Ser/Thr protein kinase family. RAC subfamily. In terms of processing, autophosphorylated. Phytosphingosine level stimulates phosphorylation by PKH1. The N-terminal half is phosphorylated by FPK1. Phosphorylation is inhibited by exogenous addition of phytosphingosine.

The protein localises to the cytoplasm. It is found in the cell membrane. It carries out the reaction L-seryl-[protein] + ATP = O-phospho-L-seryl-[protein] + ADP + H(+). The enzyme catalyses L-threonyl-[protein] + ATP = O-phospho-L-threonyl-[protein] + ADP + H(+). Activated by phytosphingosine (PHS), a sphingoid long chain base. Activated by PKH1 phosphorylation. Its function is as follows. Plays an essential role in the proliferation of yeast cells. Involved in a signaling pathway, required for optimal cell wall integrity, that acts in parallel with the PKC1-SLT2-dependent pathway. Downstream kinase in the sphingolipid-mediated signaling pathway. Phosphorylation is regulated by the intracellular sphingolipid concentration. Disruption or inhibition of sphingolipid synthesis leads to the activation and phosphorylation of YPK1 through the TORC2 and PKH1 pathways, which in turn phosphorylates ORM1 and LAG1 to activate sphingolipid synthesis. Cooperates with SLI1 in mediating resistance to the sphingolipid biosynthesis inhibitor drug myriocin (ISP-1); kinase activity is essential for the resistance. Required for both receptor-mediated and fluid-phase endocytosis, but is not necessary for receptor phosphorylation or ubiquitination. Necessary for the internalization of plasma membrane proteins carrying different types of internalization signals. Acts downstream of the PKH kinases to control endocytosis by phosphorylating components of the endocytic machinery. Phosphorylation of residue Thr-504 in the activation loop and residue Thr-662 are essential for activity. Phosphorylates and down-regulates flippase activator FPK1. This Saccharomyces cerevisiae (strain ATCC 204508 / S288c) (Baker's yeast) protein is Serine/threonine-protein kinase YPK1 (YPK1).